The sequence spans 208 residues: Uracil phosphoribosyltransferase (208 aa).

5-phospho-alpha-D-ribose 1-diphosphate is bound by residues Arg-78, Arg-103, and Asp-130–Ser-138. Uracil contacts are provided by residues Ile-193 and Gly-198–Ala-200. Asp-199 is a 5-phospho-alpha-D-ribose 1-diphosphate binding site.

The protein belongs to the UPRTase family. Mg(2+) is required as a cofactor.

The enzyme catalyses UMP + diphosphate = 5-phospho-alpha-D-ribose 1-diphosphate + uracil. It functions in the pathway pyrimidine metabolism; UMP biosynthesis via salvage pathway; UMP from uracil: step 1/1. With respect to regulation, allosterically activated by GTP. Catalyzes the conversion of uracil and 5-phospho-alpha-D-ribose 1-diphosphate (PRPP) to UMP and diphosphate. This chain is Uracil phosphoribosyltransferase, found in Pectobacterium carotovorum subsp. carotovorum (strain PC1).